The following is an 872-amino-acid chain: Alanine--tRNA ligase (872 aa).

Zn(2+) is bound by residues H567, H571, C669, and H673.

The protein belongs to the class-II aminoacyl-tRNA synthetase family. Requires Zn(2+) as cofactor.

It localises to the cytoplasm. It catalyses the reaction tRNA(Ala) + L-alanine + ATP = L-alanyl-tRNA(Ala) + AMP + diphosphate. Its function is as follows. Catalyzes the attachment of alanine to tRNA(Ala) in a two-step reaction: alanine is first activated by ATP to form Ala-AMP and then transferred to the acceptor end of tRNA(Ala). Also edits incorrectly charged Ser-tRNA(Ala) and Gly-tRNA(Ala) via its editing domain. The sequence is that of Alanine--tRNA ligase from Streptococcus agalactiae serotype Ia (strain ATCC 27591 / A909 / CDC SS700).